The primary structure comprises 26 residues: uncharacterized protein (26 aa).

The span at 1–16 shows a compositional bias: polar residues; that stretch reads MPEQKANCSPNGNITV. Residues 1–26 are disordered; sequence MPEQKANCSPNGNITVDSMIMSLGSS.

This is an uncharacterized protein from Saccharomyces cerevisiae (strain ATCC 204508 / S288c) (Baker's yeast).